Here is a 213-residue protein sequence, read N- to C-terminus: uncharacterized protein (213 aa).

The signal sequence occupies residues 1 to 19 (MKKVLLLLFVLTIGLALSA). Cysteine 20 carries N-palmitoyl cysteine lipidation. Cysteine 20 is lipidated: S-diacylglycerol cysteine. Positions 20–62 (CSQSSDASEKEKPKEKKSQEELEKELDKELKKGGEPKTKKDDQ) are disordered. Residues 26 to 62 (ASEKEKPKEKKSQEELEKELDKELKKGGEPKTKKDDQ) are compositionally biased toward basic and acidic residues.

It is found in the cell membrane. This is an uncharacterized protein from Bacillus subtilis (strain 168).